A 431-amino-acid chain; its full sequence is Histidinol dehydrogenase (431 aa).

NAD(+) contacts are provided by Tyr129, Gln191, and Asn214. Residues Ser237, Gln259, and His262 each contribute to the substrate site. Positions 259 and 262 each coordinate Zn(2+). Catalysis depends on proton acceptor residues Glu327 and His328. Substrate is bound by residues His328, Asp361, Glu415, and His420. Residue Asp361 coordinates Zn(2+). His420 provides a ligand contact to Zn(2+).

Belongs to the histidinol dehydrogenase family. Zn(2+) serves as cofactor.

The enzyme catalyses L-histidinol + 2 NAD(+) + H2O = L-histidine + 2 NADH + 3 H(+). It participates in amino-acid biosynthesis; L-histidine biosynthesis; L-histidine from 5-phospho-alpha-D-ribose 1-diphosphate: step 9/9. In terms of biological role, catalyzes the sequential NAD-dependent oxidations of L-histidinol to L-histidinaldehyde and then to L-histidine. The polypeptide is Histidinol dehydrogenase (hisD) (Lactococcus lactis subsp. lactis (strain IL1403) (Streptococcus lactis)).